A 335-amino-acid polypeptide reads, in one-letter code: Putative zinc metalloprotease CPE1693 (335 aa).

His17 is a Zn(2+) binding site. Residue Glu18 is part of the active site. A Zn(2+)-binding site is contributed by His21. 3 helical membrane passes run 88-110, 262-284, and 312-334; these read ILVM…IGLA, LLWF…FPAL, and TVGF…IFPI. The region spanning 96–174 is the PDZ domain; the sequence is FMNYVLALII…PVELEIKRGN (79 aa).

Belongs to the peptidase M50B family. It depends on Zn(2+) as a cofactor.

The protein localises to the cell membrane. The sequence is that of Putative zinc metalloprotease CPE1693 from Clostridium perfringens (strain 13 / Type A).